The following is a 252-amino-acid chain: Imidazole glycerol phosphate synthase subunit HisF (252 aa).

Catalysis depends on residues D11 and D130.

Belongs to the HisA/HisF family. In terms of assembly, heterodimer of HisH and HisF.

Its subcellular location is the cytoplasm. The catalysed reaction is 5-[(5-phospho-1-deoxy-D-ribulos-1-ylimino)methylamino]-1-(5-phospho-beta-D-ribosyl)imidazole-4-carboxamide + L-glutamine = D-erythro-1-(imidazol-4-yl)glycerol 3-phosphate + 5-amino-1-(5-phospho-beta-D-ribosyl)imidazole-4-carboxamide + L-glutamate + H(+). It functions in the pathway amino-acid biosynthesis; L-histidine biosynthesis; L-histidine from 5-phospho-alpha-D-ribose 1-diphosphate: step 5/9. Its function is as follows. IGPS catalyzes the conversion of PRFAR and glutamine to IGP, AICAR and glutamate. The HisF subunit catalyzes the cyclization activity that produces IGP and AICAR from PRFAR using the ammonia provided by the HisH subunit. This Dictyoglomus thermophilum (strain ATCC 35947 / DSM 3960 / H-6-12) protein is Imidazole glycerol phosphate synthase subunit HisF.